Here is a 365-residue protein sequence, read N- to C-terminus: Ribosomal RNA large subunit methyltransferase F (365 aa).

Low complexity-rich tracts occupy residues 1-18 (MPKP…SPAG) and 30-42 (AKLK…AASK). Residues 1–50 (MPKPAIKTAAKPATSPAGKRAKPNTPQSVAKLKASTAKAASKPKAKLGEK) form a disordered region.

Belongs to the methyltransferase superfamily. METTL16/RlmF family.

The protein resides in the cytoplasm. The catalysed reaction is adenosine(1618) in 23S rRNA + S-adenosyl-L-methionine = N(6)-methyladenosine(1618) in 23S rRNA + S-adenosyl-L-homocysteine + H(+). In terms of biological role, specifically methylates the adenine in position 1618 of 23S rRNA. The polypeptide is Ribosomal RNA large subunit methyltransferase F (Shewanella oneidensis (strain ATCC 700550 / JCM 31522 / CIP 106686 / LMG 19005 / NCIMB 14063 / MR-1)).